Consider the following 239-residue polypeptide: Adapter protein MecA (239 aa).

Basic and acidic residues predominate over residues 118–128 (EQRTKEKEAQG). The disordered stretch occupies residues 118-137 (EQRTKEKEAQGSKRQKSSAR).

Belongs to the MecA family. Homodimer.

Functionally, enables the recognition and targeting of unfolded and aggregated proteins to the ClpC protease or to other proteins involved in proteolysis. In Staphylococcus aureus (strain Mu3 / ATCC 700698), this protein is Adapter protein MecA.